The following is a 591-amino-acid chain: CTP synthase 1-A (591 aa).

Residues 300 to 554 enclose the Glutamine amidotransferase type-1 domain; sequence SIALVGKYTK…LASVGRLSQY (255 aa). Residues Cys-399, His-526, and Glu-528 each act as for GATase activity in the active site.

The protein belongs to the CTP synthase family.

It catalyses the reaction UTP + L-glutamine + ATP + H2O = CTP + L-glutamate + ADP + phosphate + 2 H(+). It functions in the pathway pyrimidine metabolism; CTP biosynthesis via de novo pathway; CTP from UDP: step 2/2. In terms of biological role, this enzyme is involved in the de novo synthesis of CTP, a precursor of DNA, RNA and phospholipids. Catalyzes the ATP-dependent amination of UTP to CTP with either L-glutamine or ammonia as a source of nitrogen. This is CTP synthase 1-A (ctps1-a) from Xenopus laevis (African clawed frog).